The following is a 529-amino-acid chain: DNA-binding protein (529 aa).

Residues 1–17 (MASREEEQRETTPERGR) are compositionally biased toward basic and acidic residues. Disordered regions lie at residues 1-107 (MASR…IVDS) and 125-166 (PVLI…AESE). The segment covering 129–139 (KHGKGGKRTVR) has biased composition (basic residues). Acidic residues predominate over residues 155 to 165 (EEEEEPSEAES). Residue Y195 is modified to Phosphotyrosine; by host. Positions 284 and 286 each coordinate Zn(2+). Positions 297-331 (IEMDVTSENGQRALKEQSSKAKIVKNRWGRNVVQI) are flexible loop. Residues C339, C355, C396, C398, C450, and C467 each contribute to the Zn(2+) site. The tract at residues 513–529 (VSLPVAHSDARQNPFDF) is C-terminal arm, DBP binding.

It belongs to the adenoviridae E2A DNA-binding protein family. As to quaternary structure, homomultimerizes on viral ssDNA bound to pTP. Forms a initiation complex with viral polymerase, pTP and hosts NFIA and POU2F1/OCT1. Interacts with host SRCAP.

The protein localises to the host nucleus. In terms of biological role, plays a role in the elongation phase of viral strand displacement replication by unwinding the template in an ATP-independent fashion, employing its capacity to form multimers. Also enhances the rate of initiation. Released from template upon second strand synthesis. Assembles in complex with viral pTP, viral pol, host NFIA and host POU2F1/OCT1 on viral origin of replication. Covers the whole ssDNA genome during synthesis. The complementary strand synthesis induces its relese from DNA template. May inhibit cellular transcription mediated by the interaction between host SRCAP and CBP. This is DNA-binding protein from Human adenovirus C serotype 5 (HAdV-5).